Reading from the N-terminus, the 851-residue chain is Molybdenum cofactor sulfurase (851 aa).

Position 249 is an N6-(pyridoxal phosphate)lysine (Lys249). Cys413 is a catalytic residue. The 180-residue stretch at Gln665–Ser844 folds into the MOSC domain.

The protein belongs to the class-V pyridoxal-phosphate-dependent aminotransferase family. MOCOS subfamily. The cofactor is pyridoxal 5'-phosphate.

It carries out the reaction Mo-molybdopterin + L-cysteine + AH2 = thio-Mo-molybdopterin + L-alanine + A + H2O. The protein operates within cofactor biosynthesis; molybdopterin biosynthesis. Its function is as follows. Sulfurates the molybdenum cofactor. Sulfation of molybdenum is essential for xanthine dehydrogenase (XDH) and aldehyde oxidase (ADO) enzymes in which molybdenum cofactor is liganded by 1 oxygen and 1 sulfur atom in active form. In Neosartorya fischeri (strain ATCC 1020 / DSM 3700 / CBS 544.65 / FGSC A1164 / JCM 1740 / NRRL 181 / WB 181) (Aspergillus fischerianus), this protein is Molybdenum cofactor sulfurase.